The following is a 240-amino-acid chain: Uridylate kinase (240 aa).

14–17 (KLSG) contributes to the ATP binding site. G56 is a UMP binding site. ATP is bound by residues G57 and R61. UMP-binding positions include D76 and 137–144 (TGNPFFTT). Positions 164, 170, and 173 each coordinate ATP.

This sequence belongs to the UMP kinase family. In terms of assembly, homohexamer.

The protein localises to the cytoplasm. The catalysed reaction is UMP + ATP = UDP + ADP. The protein operates within pyrimidine metabolism; CTP biosynthesis via de novo pathway; UDP from UMP (UMPK route): step 1/1. With respect to regulation, inhibited by UTP. Functionally, catalyzes the reversible phosphorylation of UMP to UDP. This is Uridylate kinase from Albidiferax ferrireducens (strain ATCC BAA-621 / DSM 15236 / T118) (Rhodoferax ferrireducens).